A 424-amino-acid polypeptide reads, in one-letter code: Chitinase CLP (424 aa).

Residues 1 to 18 form the signal peptide; sequence MSLHLLLAVSLCVALASS. The 363-residue stretch at 43-405 folds into the Peptidase A1 domain; the sequence is AATSLYTVPI…DEEKQRLGFS (363 aa). Residues asparagine 139, asparagine 345, and asparagine 419 are each glycosylated (N-linked (GlcNAc...) asparagine).

Belongs to the peptidase A1 family. Expressed in roots. Expressed at low levels in leaf sheaths, stems and flowers.

It localises to the secreted. It is found in the extracellular space. The protein localises to the apoplast. The enzyme catalyses Random endo-hydrolysis of N-acetyl-beta-D-glucosaminide (1-&gt;4)-beta-linkages in chitin and chitodextrins.. Functionally, chitinase that possesses antifungal activity. Inhibits the growth of the fungal pathogen Rhizoctonia solani by degrading the fungal cell wall. Does not possess inhibiting activity against fungal endo-1,4-beta-D-xylanases belonging to glycoside hydrolase family 10 (GH10) and family 11 (GH11). Involved in the regulation of plant growth by regulating the intracellular calcium ion concentration in roots. This Oryza sativa subsp. japonica (Rice) protein is Chitinase CLP.